Consider the following 442-residue polypeptide: DDB1- and CUL4-associated factor 12-B (442 aa).

Positions 1 to 13 are enriched in basic residues; sequence MTRRPVSRKRRAT. Positions 1 to 31 are disordered; it reads MTRRPVSRKRRATHGTGPGEQSDWDHSAHKR. 4 WD repeats span residues 132-173, 177-215, 245-284, and 333-370; these read SHQS…PVCV, GHNDWIFSIAWISDTMAVSGSRDGFMALWEMTDEVVNKR, PVNCKVRALAFNGNNKELGAVSLDGFFHLWKAEQTLSKLL, and EQGSGIRSVSFYEHIVTVGTGQGALLFYDIRAQRFLED.

Belongs to the WD repeat DCAF12 family. In terms of assembly, component of the DCX(DCAF12) E3 ubiquitin ligase complex, at least composed of cul4 (cul4a or cul4b), ddb1, dcaf12 and rbx1.

Its subcellular location is the cytoplasm. The protein resides in the cytoskeleton. It localises to the microtubule organizing center. The protein localises to the centrosome. It is found in the nucleus. It functions in the pathway protein modification; protein ubiquitination. In terms of biological role, substrate-recognition component of a DCX (DDB1-CUL4-X-box) E3 ubiquitin-protein ligase complex of the DesCEND (destruction via C-end degrons) pathway, which recognizes a C-degron located at the extreme C terminus of target proteins, leading to their ubiquitination and degradation. The C-degron recognized by the DesCEND pathway is usually a motif of less than ten residues and can be present in full-length proteins, truncated proteins or proteolytically cleaved forms. The DCX(DCAF12) complex specifically recognizes proteins with a diglutamate (Glu-Glu) at the C-terminus leading to their ubiquitination and degradation. Also directly recognizes the C-terminal glutamate-leucine (Glu-Leu) degron as an alternative degron in proteins leading to their ubiquitination and degradation. The chain is DDB1- and CUL4-associated factor 12-B (dcaf12-b) from Xenopus laevis (African clawed frog).